The chain runs to 264 residues: Small ribosomal subunit protein uS2 (264 aa).

Belongs to the universal ribosomal protein uS2 family.

The polypeptide is Small ribosomal subunit protein uS2 (Synechococcus sp. (strain JA-2-3B'a(2-13)) (Cyanobacteria bacterium Yellowstone B-Prime)).